Reading from the N-terminus, the 209-residue chain is ATP-dependent Clp protease proteolytic subunit (209 aa).

Serine 106 functions as the Nucleophile in the catalytic mechanism. Histidine 131 is a catalytic residue.

Belongs to the peptidase S14 family. As to quaternary structure, fourteen ClpP subunits assemble into 2 heptameric rings which stack back to back to give a disk-like structure with a central cavity, resembling the structure of eukaryotic proteasomes.

It is found in the cytoplasm. The enzyme catalyses Hydrolysis of proteins to small peptides in the presence of ATP and magnesium. alpha-casein is the usual test substrate. In the absence of ATP, only oligopeptides shorter than five residues are hydrolyzed (such as succinyl-Leu-Tyr-|-NHMec, and Leu-Tyr-Leu-|-Tyr-Trp, in which cleavage of the -Tyr-|-Leu- and -Tyr-|-Trp bonds also occurs).. Functionally, cleaves peptides in various proteins in a process that requires ATP hydrolysis. Has a chymotrypsin-like activity. Plays a major role in the degradation of misfolded proteins. In Brucella canis (strain ATCC 23365 / NCTC 10854 / RM-666), this protein is ATP-dependent Clp protease proteolytic subunit.